We begin with the raw amino-acid sequence, 316 residues long: ATP synthase gamma chain (316 aa).

Belongs to the ATPase gamma chain family. As to quaternary structure, F-type ATPases have 2 components, CF(1) - the catalytic core - and CF(0) - the membrane proton channel. CF(1) has five subunits: alpha(3), beta(3), gamma(1), delta(1), epsilon(1). CF(0) has three main subunits: a, b and c.

The protein resides in the cellular thylakoid membrane. Produces ATP from ADP in the presence of a proton gradient across the membrane. The gamma chain is believed to be important in regulating ATPase activity and the flow of protons through the CF(0) complex. The chain is ATP synthase gamma chain from Synechococcus sp. (strain ATCC 27144 / PCC 6301 / SAUG 1402/1) (Anacystis nidulans).